A 375-amino-acid chain; its full sequence is Aminomethyltransferase (375 aa).

The protein belongs to the GcvT family. As to quaternary structure, the glycine cleavage system is composed of four proteins: P, T, L and H.

The catalysed reaction is N(6)-[(R)-S(8)-aminomethyldihydrolipoyl]-L-lysyl-[protein] + (6S)-5,6,7,8-tetrahydrofolate = N(6)-[(R)-dihydrolipoyl]-L-lysyl-[protein] + (6R)-5,10-methylene-5,6,7,8-tetrahydrofolate + NH4(+). The glycine cleavage system catalyzes the degradation of glycine. The sequence is that of Aminomethyltransferase from Symbiobacterium thermophilum (strain DSM 24528 / JCM 14929 / IAM 14863 / T).